A 295-amino-acid polypeptide reads, in one-letter code: 4-hydroxy-tetrahydrodipicolinate synthase (295 aa).

Thr-47 contributes to the pyruvate binding site. Catalysis depends on Tyr-135, which acts as the Proton donor/acceptor. Lys-163 (schiff-base intermediate with substrate) is an active-site residue. Residue Ile-206 coordinates pyruvate.

This sequence belongs to the DapA family. As to quaternary structure, homodimer.

Its subcellular location is the cytoplasm. The enzyme catalyses L-aspartate 4-semialdehyde + pyruvate = (2S,4S)-4-hydroxy-2,3,4,5-tetrahydrodipicolinate + H2O + H(+). Its pathway is amino-acid biosynthesis; L-lysine biosynthesis via DAP pathway; (S)-tetrahydrodipicolinate from L-aspartate: step 3/4. In terms of biological role, catalyzes the condensation of (S)-aspartate-beta-semialdehyde [(S)-ASA] and pyruvate to 4-hydroxy-tetrahydrodipicolinate (HTPA). This chain is 4-hydroxy-tetrahydrodipicolinate synthase, found in Staphylococcus aureus (strain MSSA476).